The primary structure comprises 511 residues: 2,3-bisphosphoglycerate-independent phosphoglycerate mutase (511 aa).

Mn(2+)-binding residues include Asp12 and Ser62. Ser62 functions as the Phosphoserine intermediate in the catalytic mechanism. Residues His123, 153 to 154 (RD), Arg185, Arg191, 260 to 263 (RPDR), and Lys333 contribute to the substrate site. Residues Asp400, His404, Asp441, His442, and His460 each coordinate Mn(2+).

Belongs to the BPG-independent phosphoglycerate mutase family. In terms of assembly, monomer. Mn(2+) is required as a cofactor.

The catalysed reaction is (2R)-2-phosphoglycerate = (2R)-3-phosphoglycerate. The protein operates within carbohydrate degradation; glycolysis; pyruvate from D-glyceraldehyde 3-phosphate: step 3/5. In terms of biological role, catalyzes the interconversion of 2-phosphoglycerate and 3-phosphoglycerate. This Clostridium novyi (strain NT) protein is 2,3-bisphosphoglycerate-independent phosphoglycerate mutase.